The following is a 201-amino-acid chain: uncharacterized protein (201 aa).

A disordered region spans residues 1–22; that stretch reads MAASKAAKSSEDRAGGGGGGGG.

This is an uncharacterized protein from Tomato ringspot virus (isolate raspberry) (ToRSV).